We begin with the raw amino-acid sequence, 423 residues long: MAKTIQAIRGMNDCAPTESPLWQWIEAQVRNVLNSYGYSEVRMPIVESTPLFARAIGEVTDVVSKEMYTFWDNDEQLTLRPEGTAGCVRAAIEHGWIYNNEQRLWYIGPMFRHERPQKGRYRQFHQAGVEVFGIANPKIDAELIMLTYRLWKALGIDQYVTLQLNSIGSLEARANYRSALVGFLENHQDLMSDEEKDRLVKNPLRILDTKNPELQKVLDNAPKLLDYLDDESREHFEQLCSLLDAVGIQYEINPKLVRGLDYYNKTVFEWVTSALGAQGTVCGGGRYDGLVEQLGGHATPSIGFAMGLERLVLLVQEVNPNVPVKSAVDIYVVYQGEGTTLAAFELAEKVRSELPHLNTMLHCSGGNFKKQFKRADKSGATLALVIGESEVQNKQVVVKHLQGGADQQTLDLVNIIDYIQTQF.

It belongs to the class-II aminoacyl-tRNA synthetase family. In terms of assembly, homodimer.

It is found in the cytoplasm. The catalysed reaction is tRNA(His) + L-histidine + ATP = L-histidyl-tRNA(His) + AMP + diphosphate + H(+). In Haemophilus influenzae (strain PittEE), this protein is Histidine--tRNA ligase.